A 165-amino-acid chain; its full sequence is 2-C-methyl-D-erythritol 2,4-cyclodiphosphate synthase (165 aa).

Residues Asp13 and His15 each contribute to the a divalent metal cation site. Residues 13-15 and 39-40 contribute to the 4-CDP-2-C-methyl-D-erythritol 2-phosphate site; these read DRH and HS. His47 serves as a coordination point for a divalent metal cation. 4-CDP-2-C-methyl-D-erythritol 2-phosphate contacts are provided by residues 61-63 and Phe141; that span reads DIG.

The protein belongs to the IspF family. In terms of assembly, homotrimer. Requires a divalent metal cation as cofactor.

It catalyses the reaction 4-CDP-2-C-methyl-D-erythritol 2-phosphate = 2-C-methyl-D-erythritol 2,4-cyclic diphosphate + CMP. It participates in isoprenoid biosynthesis; isopentenyl diphosphate biosynthesis via DXP pathway; isopentenyl diphosphate from 1-deoxy-D-xylulose 5-phosphate: step 4/6. Functionally, involved in the biosynthesis of isopentenyl diphosphate (IPP) and dimethylallyl diphosphate (DMAPP), two major building blocks of isoprenoid compounds. Catalyzes the conversion of 4-diphosphocytidyl-2-C-methyl-D-erythritol 2-phosphate (CDP-ME2P) to 2-C-methyl-D-erythritol 2,4-cyclodiphosphate (ME-CPP) with a corresponding release of cytidine 5-monophosphate (CMP). The protein is 2-C-methyl-D-erythritol 2,4-cyclodiphosphate synthase of Thermotoga neapolitana (strain ATCC 49049 / DSM 4359 / NBRC 107923 / NS-E).